Here is a 172-residue protein sequence, read N- to C-terminus: Crossover junction endodeoxyribonuclease RuvC (172 aa).

Active-site residues include aspartate 7, glutamate 68, and aspartate 140. Aspartate 7, glutamate 68, and aspartate 140 together coordinate Mg(2+).

The protein belongs to the RuvC family. Homodimer which binds Holliday junction (HJ) DNA. The HJ becomes 2-fold symmetrical on binding to RuvC with unstacked arms; it has a different conformation from HJ DNA in complex with RuvA. In the full resolvosome a probable DNA-RuvA(4)-RuvB(12)-RuvC(2) complex forms which resolves the HJ. Mg(2+) serves as cofactor.

The protein resides in the cytoplasm. The catalysed reaction is Endonucleolytic cleavage at a junction such as a reciprocal single-stranded crossover between two homologous DNA duplexes (Holliday junction).. In terms of biological role, the RuvA-RuvB-RuvC complex processes Holliday junction (HJ) DNA during genetic recombination and DNA repair. Endonuclease that resolves HJ intermediates. Cleaves cruciform DNA by making single-stranded nicks across the HJ at symmetrical positions within the homologous arms, yielding a 5'-phosphate and a 3'-hydroxyl group; requires a central core of homology in the junction. The consensus cleavage sequence is 5'-(A/T)TT(C/G)-3'. Cleavage occurs on the 3'-side of the TT dinucleotide at the point of strand exchange. HJ branch migration catalyzed by RuvA-RuvB allows RuvC to scan DNA until it finds its consensus sequence, where it cleaves and resolves the cruciform DNA. The protein is Crossover junction endodeoxyribonuclease RuvC of Polynucleobacter asymbioticus (strain DSM 18221 / CIP 109841 / QLW-P1DMWA-1) (Polynucleobacter necessarius subsp. asymbioticus).